The chain runs to 864 residues: Leucine--tRNA ligase (864 aa).

The 'HIGH' region motif lies at 42-52; sequence PYPSGKLHMGH. A 'KMSKS' region motif is present at residues 624 to 628; it reads KMSKS. Lys-627 serves as a coordination point for ATP.

It belongs to the class-I aminoacyl-tRNA synthetase family.

The protein localises to the cytoplasm. It carries out the reaction tRNA(Leu) + L-leucine + ATP = L-leucyl-tRNA(Leu) + AMP + diphosphate. The chain is Leucine--tRNA ligase from Burkholderia pseudomallei (strain 668).